The primary structure comprises 308 residues: Cell division protein ZipA (308 aa).

Residues 1–5 (MQELR) are Periplasmic-facing. A helical membrane pass occupies residues 6 to 26 (LVLILVGALAIAALLFHGLWT). Topologically, residues 27–308 (SRKETSSKFG…YKQRVKVFCN (282 aa)) are cytoplasmic. Residues 43–90 (FDSESEDEQPTPARGFEQPKESVVDVRQERKEPAFGRDEPNLSQDPLF) are disordered. Positions 59-82 (EQPKESVVDVRQERKEPAFGRDEP) are enriched in basic and acidic residues.

Belongs to the ZipA family. As to quaternary structure, interacts with FtsZ via their C-terminal domains.

It localises to the cell inner membrane. In terms of biological role, essential cell division protein that stabilizes the FtsZ protofilaments by cross-linking them and that serves as a cytoplasmic membrane anchor for the Z ring. Also required for the recruitment to the septal ring of downstream cell division proteins. In Aliivibrio salmonicida (strain LFI1238) (Vibrio salmonicida (strain LFI1238)), this protein is Cell division protein ZipA.